Reading from the N-terminus, the 473-residue chain is Photosystem II CP43 reaction center protein (473 aa).

A propeptide spanning residues 1–14 (MKTLYSLRRFYHVE) is cleaved from the precursor. Threonine 15 is modified (N-acetylthreonine). Threonine 15 is modified (phosphothreonine). A run of 5 helical transmembrane segments spans residues 69-93 (LFEVAHFVPEKPMYEQGLILLPHLA), 134-155 (LLGPETLEESFPFFGYVWKDRN), 178-200 (KALFFGGIYDTWAPGGGDVRKIT), 255-275 (KPFAWARRALVWSGEAYLSYS), and 291-312 (WFNNTAYPSEFYGPTGPEASQA). Glutamate 367 lines the [CaMn4O5] cluster pocket. Residues 447 to 471 (RARAAAAGFEKGIDRDFEPVLSMTP) form a helical membrane-spanning segment.

It belongs to the PsbB/PsbC family. PsbC subfamily. PSII is composed of 1 copy each of membrane proteins PsbA, PsbB, PsbC, PsbD, PsbE, PsbF, PsbH, PsbI, PsbJ, PsbK, PsbL, PsbM, PsbT, PsbX, PsbY, PsbZ, Psb30/Ycf12, at least 3 peripheral proteins of the oxygen-evolving complex and a large number of cofactors. It forms dimeric complexes. Requires Binds multiple chlorophylls and provides some of the ligands for the Ca-4Mn-5O cluster of the oxygen-evolving complex. It may also provide a ligand for a Cl- that is required for oxygen evolution. PSII binds additional chlorophylls, carotenoids and specific lipids. as cofactor.

It localises to the plastid. The protein resides in the chloroplast thylakoid membrane. In terms of biological role, one of the components of the core complex of photosystem II (PSII). It binds chlorophyll and helps catalyze the primary light-induced photochemical processes of PSII. PSII is a light-driven water:plastoquinone oxidoreductase, using light energy to abstract electrons from H(2)O, generating O(2) and a proton gradient subsequently used for ATP formation. This Fagopyrum esculentum subsp. ancestrale (Wild buckwheat) protein is Photosystem II CP43 reaction center protein.